The following is a 538-amino-acid chain: Methionine--tRNA ligase (538 aa).

The short motif at tyrosine 21–histidine 31 is the 'HIGH' region element. Zn(2+) is bound by residues cysteine 137, cysteine 140, cysteine 162, and histidine 165. The 'KMSKS' region motif lies at lysine 313–serine 317. Residue lysine 316 participates in ATP binding.

The protein belongs to the class-I aminoacyl-tRNA synthetase family. MetG type 2A subfamily. As to quaternary structure, monomer. The cofactor is Zn(2+).

It localises to the cytoplasm. It catalyses the reaction tRNA(Met) + L-methionine + ATP = L-methionyl-tRNA(Met) + AMP + diphosphate. Its function is as follows. Is required not only for elongation of protein synthesis but also for the initiation of all mRNA translation through initiator tRNA(fMet) aminoacylation. This Streptomyces coelicolor (strain ATCC BAA-471 / A3(2) / M145) protein is Methionine--tRNA ligase.